The sequence spans 238 residues: 3-dehydroquinate dehydratase (238 aa).

3-dehydroquinate contacts are provided by residues 35–37 (ELR) and arginine 70. Catalysis depends on histidine 133, which acts as the Proton donor/acceptor. The Schiff-base intermediate with substrate role is filled by lysine 160. 3-dehydroquinate-binding residues include arginine 202 and glutamine 225.

The protein belongs to the type-I 3-dehydroquinase family. As to quaternary structure, homodimer.

It catalyses the reaction 3-dehydroquinate = 3-dehydroshikimate + H2O. The protein operates within metabolic intermediate biosynthesis; chorismate biosynthesis; chorismate from D-erythrose 4-phosphate and phosphoenolpyruvate: step 3/7. Its function is as follows. Involved in the third step of the chorismate pathway, which leads to the biosynthesis of aromatic amino acids. Catalyzes the cis-dehydration of 3-dehydroquinate (DHQ) and introduces the first double bond of the aromatic ring to yield 3-dehydroshikimate. The chain is 3-dehydroquinate dehydratase from Staphylococcus aureus (strain USA300).